Here is a 607-residue protein sequence, read N- to C-terminus: Fatty acid amide hydrolase (607 aa).

Active-site charge relay system residues include lysine 205 and serine 281. 302 to 305 (GGGS) serves as a coordination point for substrate. The active-site Acyl-ester intermediate is the serine 305.

Belongs to the amidase family. Forms homodimers. Expressed in roots, leaves and flowers. Expressed in seedlings, flowers, roots, siliques, seeds and leaves.

It localises to the endoplasmic reticulum membrane. The protein localises to the cell membrane. The catalysed reaction is N-(5Z,8Z,11Z,14Z-eicosatetraenoyl)-ethanolamine + H2O = ethanolamine + (5Z,8Z,11Z,14Z)-eicosatetraenoate. It catalyses the reaction N-(9Z,12Z-octadecadienoyl)-ethanolamine + H2O = ethanolamine + (9Z,12Z)-octadecadienoate. The enzyme catalyses N-hexadecanoylethanolamine + H2O = ethanolamine + hexadecanoate. It carries out the reaction N-tetradecanoylethanolamine + H2O = tetradecanoate + ethanolamine. The catalysed reaction is N-dodecanoylethanolamine + H2O = dodecanoate + ethanolamine. With respect to regulation, inhibited by methyl arachidonyl fluorophosphonate (MAFP). Catalyzes the hydrolysis of bioactive endogenous fatty acid amides to their corresponding acids. The hydrolysis of endogenous amidated lipids terminates their participation as lipid mediators in various signaling systems. Converts a wide range of N-acylethanolamines (NAEs) to their corresponding free fatty acids and ethanolamine. Can use oleamide as substrate, but not indole-3-acetamide, 1-naphtalene-acetamide, nicotinic acid amide or L-asparagine. Can use 2-arachidonylglycerol as substrate. Participates in the regulation of plant growth. Hydrolyzes N-dodecanoylethanolamine, which is has a growth inhibitory effect on seedling growth. Involved in plant defense signaling. Involved in abscisic acid (ABA) signaling through mechanisms that are independent of the catalytic activity. Involved in the regulation of flowering time. Catalyzes the hydrolysis of N-acyl L-homoserine lactones (AHLs), which are a class of signaling molecules produced by bacteria for quorum sensing. Accumulation of L-homoserine appears to encourage plant growth at low concentrations by stimulating transpiration, but higher concentrations inhibit growth by stimulating ethylene production. This Arabidopsis thaliana (Mouse-ear cress) protein is Fatty acid amide hydrolase.